The primary structure comprises 313 residues: Cytosolic Fe-S cluster assembly factor NUBP1 homolog (313 aa).

The tract at residues 1-25 (MSDVPEDANAGCPGTGSAGAGKASG) is disordered. C12, C26, C29, and C35 together coordinate [4Fe-4S] cluster. 66–73 (GKGGVGKS) contributes to the ATP binding site. The [4Fe-4S] cluster site is built by C240 and C243.

Belongs to the Mrp/NBP35 ATP-binding proteins family. NUBP1/NBP35 subfamily. Heterotetramer of 2 NUBP1 and 2 NUBP2 chains. Requires [4Fe-4S] cluster as cofactor.

The protein localises to the cytoplasm. Its subcellular location is the cell projection. In terms of biological role, component of the cytosolic iron-sulfur (Fe/S) protein assembly (CIA) machinery. Required for maturation of extramitochondrial Fe-S proteins. The NUBP1-NUBP2 heterotetramer forms a Fe-S scaffold complex, mediating the de novo assembly of an Fe-S cluster and its transfer to target apoproteins. Regulates cilium formation and structure. This chain is Cytosolic Fe-S cluster assembly factor NUBP1 homolog, found in Caenorhabditis briggsae.